Reading from the N-terminus, the 490-residue chain is Bifunctional protein HldE (490 aa).

The segment at M1–A330 is ribokinase. N205–E208 serves as a coordination point for ATP. D275 is a catalytic residue. Residues F358–S490 form a cytidylyltransferase region.

The protein in the N-terminal section; belongs to the carbohydrate kinase PfkB family. It in the C-terminal section; belongs to the cytidylyltransferase family. As to quaternary structure, homodimer.

It carries out the reaction D-glycero-beta-D-manno-heptose 7-phosphate + ATP = D-glycero-beta-D-manno-heptose 1,7-bisphosphate + ADP + H(+). The enzyme catalyses D-glycero-beta-D-manno-heptose 1-phosphate + ATP + H(+) = ADP-D-glycero-beta-D-manno-heptose + diphosphate. It functions in the pathway nucleotide-sugar biosynthesis; ADP-L-glycero-beta-D-manno-heptose biosynthesis; ADP-L-glycero-beta-D-manno-heptose from D-glycero-beta-D-manno-heptose 7-phosphate: step 1/4. Its pathway is nucleotide-sugar biosynthesis; ADP-L-glycero-beta-D-manno-heptose biosynthesis; ADP-L-glycero-beta-D-manno-heptose from D-glycero-beta-D-manno-heptose 7-phosphate: step 3/4. In terms of biological role, catalyzes the phosphorylation of D-glycero-D-manno-heptose 7-phosphate at the C-1 position to selectively form D-glycero-beta-D-manno-heptose-1,7-bisphosphate. Its function is as follows. Catalyzes the ADP transfer from ATP to D-glycero-beta-D-manno-heptose 1-phosphate, yielding ADP-D-glycero-beta-D-manno-heptose. This chain is Bifunctional protein HldE, found in Rhodopseudomonas palustris (strain BisA53).